A 177-amino-acid polypeptide reads, in one-letter code: tRNA-splicing endonuclease (177 aa).

Catalysis depends on residues Tyr-114, His-123, and Lys-154.

It belongs to the tRNA-intron endonuclease family. Archaeal short subfamily. As to quaternary structure, homotetramer; although the tetramer contains four active sites, only two participate in the cleavage. Therefore, it should be considered as a dimer of dimers.

The enzyme catalyses pretRNA = a 3'-half-tRNA molecule with a 5'-OH end + a 5'-half-tRNA molecule with a 2',3'-cyclic phosphate end + an intron with a 2',3'-cyclic phosphate and a 5'-hydroxyl terminus.. Endonuclease that removes tRNA introns. Cleaves pre-tRNA at the 5'- and 3'-splice sites to release the intron. The products are an intron and two tRNA half-molecules bearing 2',3' cyclic phosphate and 5'-OH termini. Recognizes a pseudosymmetric substrate in which 2 bulged loops of 3 bases are separated by a stem of 4 bp. This chain is tRNA-splicing endonuclease, found in Methanococcus maripaludis (strain DSM 14266 / JCM 13030 / NBRC 101832 / S2 / LL).